A 154-amino-acid polypeptide reads, in one-letter code: Small ribosomal subunit protein uS15 (154 aa).

The disordered stretch occupies residues 1–23 (MNKKRDKGQSHSTRPARAGPPRW).

It belongs to the universal ribosomal protein uS15 family. Part of the 30S ribosomal subunit.

The polypeptide is Small ribosomal subunit protein uS15 (Staphylothermus marinus (strain ATCC 43588 / DSM 3639 / JCM 9404 / F1)).